Here is an 824-residue protein sequence, read N- to C-terminus: Translation initiation factor IF-2 (824 aa).

The interval 1–234 is disordered; it reads MSDQDGKKPL…RQKAMGGSVD (234 aa). 2 stretches are compositionally biased toward basic and acidic residues: residues 59-75 and 82-144; these read GGKRDKSVPDAEMDRRL and KARE…RRNA. A compositionally biased stretch (low complexity) spans 145 to 159; that stretch reads PPEAAAPAVDPAAAA. Positions 170 to 186 are enriched in basic and acidic residues; sequence ARREPERDNKRENRSRG. Positions 321-491 constitute a tr-type G domain; it reads PRPPVITIMG…ALQAELLELK (171 aa). The interval 330–337 is G1; it reads GHVDHGKT. 330–337 serves as a coordination point for GTP; sequence GHVDHGKT. Residues 355 to 359 form a G2 region; the sequence is GITQH. Positions 377-380 are G3; the sequence is DTPG. GTP-binding positions include 377–381 and 431–434; these read DTPGH and NKID. The interval 431–434 is G4; it reads NKID. The G5 stretch occupies residues 467–469; that stretch reads SAM.

The protein belongs to the TRAFAC class translation factor GTPase superfamily. Classic translation factor GTPase family. IF-2 subfamily.

It localises to the cytoplasm. One of the essential components for the initiation of protein synthesis. Protects formylmethionyl-tRNA from spontaneous hydrolysis and promotes its binding to the 30S ribosomal subunits. Also involved in the hydrolysis of GTP during the formation of the 70S ribosomal complex. This is Translation initiation factor IF-2 from Jannaschia sp. (strain CCS1).